We begin with the raw amino-acid sequence, 108 residues long: Tubulin-specific chaperone A (108 aa).

N-acetylalanine is present on Ala2.

This sequence belongs to the TBCA family. In terms of assembly, supercomplex made of cofactors A to E. Cofactors A and D function by capturing and stabilizing tubulin in a quasi-native conformation. Cofactor E binds to the cofactor D-tubulin complex; interaction with cofactor C then causes the release of tubulin polypeptides that are committed to the native state.

Its subcellular location is the cytoplasm. It localises to the cytoskeleton. Tubulin-folding protein; involved in the early step of the tubulin folding pathway. The sequence is that of Tubulin-specific chaperone A (TBCA) from Homo sapiens (Human).